The following is a 245-amino-acid chain: 1-(5-phosphoribosyl)-5-[(5-phosphoribosylamino)methylideneamino] imidazole-4-carboxamide isomerase (245 aa).

The active-site Proton acceptor is the D8. D130 acts as the Proton donor in catalysis.

Belongs to the HisA/HisF family.

It localises to the cytoplasm. The enzyme catalyses 1-(5-phospho-beta-D-ribosyl)-5-[(5-phospho-beta-D-ribosylamino)methylideneamino]imidazole-4-carboxamide = 5-[(5-phospho-1-deoxy-D-ribulos-1-ylimino)methylamino]-1-(5-phospho-beta-D-ribosyl)imidazole-4-carboxamide. It participates in amino-acid biosynthesis; L-histidine biosynthesis; L-histidine from 5-phospho-alpha-D-ribose 1-diphosphate: step 4/9. The polypeptide is 1-(5-phosphoribosyl)-5-[(5-phosphoribosylamino)methylideneamino] imidazole-4-carboxamide isomerase (Ectopseudomonas mendocina (strain ymp) (Pseudomonas mendocina)).